The primary structure comprises 331 residues: Ketol-acid reductoisomerase (NADP(+)) (331 aa).

One can recognise a KARI N-terminal Rossmann domain in the interval 2 to 182 (AKMYYDKDAD…GGTRAGVIET (181 aa)). NADP(+) contacts are provided by residues 25 to 28 (FGSQ), S51, S53, and 83 to 86 (DEKQ). Residue H108 is part of the active site. G134 serves as a coordination point for NADP(+). Positions 183-328 (TFKEETETDL…KGLREMMAWI (146 aa)) constitute a KARI C-terminal knotted domain. Residues D191, E195, E227, and E231 each coordinate Mg(2+). S252 is a binding site for substrate.

The protein belongs to the ketol-acid reductoisomerase family. It depends on Mg(2+) as a cofactor.

The enzyme catalyses (2R)-2,3-dihydroxy-3-methylbutanoate + NADP(+) = (2S)-2-acetolactate + NADPH + H(+). The catalysed reaction is (2R,3R)-2,3-dihydroxy-3-methylpentanoate + NADP(+) = (S)-2-ethyl-2-hydroxy-3-oxobutanoate + NADPH + H(+). It functions in the pathway amino-acid biosynthesis; L-isoleucine biosynthesis; L-isoleucine from 2-oxobutanoate: step 2/4. Its pathway is amino-acid biosynthesis; L-valine biosynthesis; L-valine from pyruvate: step 2/4. In terms of biological role, involved in the biosynthesis of branched-chain amino acids (BCAA). Catalyzes an alkyl-migration followed by a ketol-acid reduction of (S)-2-acetolactate (S2AL) to yield (R)-2,3-dihydroxy-isovalerate. In the isomerase reaction, S2AL is rearranged via a Mg-dependent methyl migration to produce 3-hydroxy-3-methyl-2-ketobutyrate (HMKB). In the reductase reaction, this 2-ketoacid undergoes a metal-dependent reduction by NADPH to yield (R)-2,3-dihydroxy-isovalerate. This Thermoanaerobacter pseudethanolicus (strain ATCC 33223 / 39E) (Clostridium thermohydrosulfuricum) protein is Ketol-acid reductoisomerase (NADP(+)).